Reading from the N-terminus, the 287-residue chain is Iodotyrosine deiodinase (287 aa).

Residues 15–34 traverse the membrane as a helical segment; sequence HWPSLFITLALIWIVKRLFF. FMN contacts are provided by residues 96–100, Ser-125, and 125–126; these read RRSIR and SG. 4 residues coordinate 3,5-diiodo-L-tyrosine: Ala-127, Glu-154, Tyr-158, and Lys-179. 4 residues coordinate 3-iodo-L-tyrosine: Ala-127, Glu-154, Tyr-158, and Lys-179. FMN is bound by residues 235 to 237 and Arg-277; that span reads VTT.

It belongs to the nitroreductase family. In terms of assembly, homodimer. FMN serves as cofactor. As to expression, expressed in spermatocytes.

Its subcellular location is the cell membrane. It carries out the reaction 2 iodide + L-tyrosine + 2 NADP(+) = 3,5-diiodo-L-tyrosine + 2 NADPH + H(+). The enzyme catalyses iodide + L-tyrosine + NADP(+) = 3-iodo-L-tyrosine + NADPH. The catalysed reaction is 3-iodo-L-tyrosine + iodide + NADP(+) = 3,5-diiodo-L-tyrosine + NADPH + H(+). It catalyses the reaction L-tyrosine + chloride + NADP(+) = 3-chloro-L-tyrosine + NADPH. It carries out the reaction bromide + L-tyrosine + NADP(+) = 3-bromo-L-tyrosine + NADPH. Functionally, catalyzes the dehalogenation of halotyrosines such as 3-bromo-L-tyrosine, 3-chloro-L-tyrosine, 3-iodo-L-tyrosine and 3,5-diiodo-L-tyrosine. Activity towards 3-fluoro-L-tyrosine is weak. Important for male and female fertility. May be involved in maintaining the viability of sperm, both during development in the testes and storage in the female spermatheca. The sequence is that of Iodotyrosine deiodinase from Drosophila melanogaster (Fruit fly).